Here is a 165-residue protein sequence, read N- to C-terminus: Phosphopantetheine adenylyltransferase (165 aa).

Threonine 11 provides a ligand contact to substrate. Residues 11–12 (TF) and histidine 19 each bind ATP. Lysine 43, threonine 79, and arginine 93 together coordinate substrate. ATP-binding positions include glutamate 104 and 128–134 (LEPLNST).

It belongs to the bacterial CoaD family. In terms of assembly, homohexamer. The cofactor is Mg(2+).

The protein localises to the cytoplasm. The enzyme catalyses (R)-4'-phosphopantetheine + ATP + H(+) = 3'-dephospho-CoA + diphosphate. It functions in the pathway cofactor biosynthesis; coenzyme A biosynthesis; CoA from (R)-pantothenate: step 4/5. Its function is as follows. Reversibly transfers an adenylyl group from ATP to 4'-phosphopantetheine, yielding dephospho-CoA (dPCoA) and pyrophosphate. The protein is Phosphopantetheine adenylyltransferase of Lactococcus lactis subsp. lactis (strain IL1403) (Streptococcus lactis).